Here is a 458-residue protein sequence, read N- to C-terminus: UDP-N-acetylmuramoylalanine--D-glutamate ligase (458 aa).

Residue 124 to 130 participates in ATP binding; sequence GSDGKTT.

Belongs to the MurCDEF family.

The protein localises to the cytoplasm. The enzyme catalyses UDP-N-acetyl-alpha-D-muramoyl-L-alanine + D-glutamate + ATP = UDP-N-acetyl-alpha-D-muramoyl-L-alanyl-D-glutamate + ADP + phosphate + H(+). It functions in the pathway cell wall biogenesis; peptidoglycan biosynthesis. Functionally, cell wall formation. Catalyzes the addition of glutamate to the nucleotide precursor UDP-N-acetylmuramoyl-L-alanine (UMA). This is UDP-N-acetylmuramoylalanine--D-glutamate ligase from Clostridium perfringens (strain 13 / Type A).